Reading from the N-terminus, the 456-residue chain is Exodeoxyribonuclease 7 large subunit (456 aa).

It belongs to the XseA family. As to quaternary structure, heterooligomer composed of large and small subunits.

Its subcellular location is the cytoplasm. It catalyses the reaction Exonucleolytic cleavage in either 5'- to 3'- or 3'- to 5'-direction to yield nucleoside 5'-phosphates.. Its function is as follows. Bidirectionally degrades single-stranded DNA into large acid-insoluble oligonucleotides, which are then degraded further into small acid-soluble oligonucleotides. The sequence is that of Exodeoxyribonuclease 7 large subunit from Shigella flexneri serotype 5b (strain 8401).